Consider the following 227-residue polypeptide: uncharacterized protein (227 aa).

This is an uncharacterized protein from Caenorhabditis elegans.